Consider the following 273-residue polypeptide: 3-keto-5-aminohexanoate cleavage enzyme (273 aa).

(5S)-5-amino-3-oxohexanoate is bound at residue glutamate 14. Zn(2+) contacts are provided by histidine 46 and histidine 48. Positions 82, 85, and 106 each coordinate (5S)-5-amino-3-oxohexanoate. Residue glutamate 227 coordinates Zn(2+).

Belongs to the BKACE family. Kce subfamily. As to quaternary structure, homotetramer. The cofactor is Zn(2+).

It carries out the reaction (5S)-5-amino-3-oxohexanoate + acetyl-CoA = (3S)-3-aminobutanoyl-CoA + acetoacetate. Its pathway is amino-acid degradation; L-lysine degradation via acetate pathway. In terms of biological role, involved in the anaerobic fermentation of lysine. Catalyzes the reversible reaction between 3-keto-5-aminohexanoate (KAH) and acetyl-CoA to form 3-aminobutyryl-CoA and acetoacetate. The reaction involves the deprotonation of KAH, the nucleophilic addition onto acetyl-CoA and the intramolecular transfer of the CoA moiety. This is 3-keto-5-aminohexanoate cleavage enzyme from Acetoanaerobium sticklandii (strain ATCC 12662 / DSM 519 / JCM 1433 / CCUG 9281 / NCIMB 10654 / HF) (Clostridium sticklandii).